The primary structure comprises 295 residues: Bifunctional protein FolD (295 aa).

NADP(+)-binding positions include 166 to 168, Ser195, and Ile236; that span reads GRS.

Belongs to the tetrahydrofolate dehydrogenase/cyclohydrolase family. As to quaternary structure, homodimer.

The enzyme catalyses (6R)-5,10-methylene-5,6,7,8-tetrahydrofolate + NADP(+) = (6R)-5,10-methenyltetrahydrofolate + NADPH. It carries out the reaction (6R)-5,10-methenyltetrahydrofolate + H2O = (6R)-10-formyltetrahydrofolate + H(+). Its pathway is one-carbon metabolism; tetrahydrofolate interconversion. In terms of biological role, catalyzes the oxidation of 5,10-methylenetetrahydrofolate to 5,10-methenyltetrahydrofolate and then the hydrolysis of 5,10-methenyltetrahydrofolate to 10-formyltetrahydrofolate. This Pelodictyon phaeoclathratiforme (strain DSM 5477 / BU-1) protein is Bifunctional protein FolD.